We begin with the raw amino-acid sequence, 99 residues long: Putative UPF0320 protein YDR543C (99 aa).

Positions 80–99 are disordered; it reads EKSPPKSPKHKNILSFNNNT.

It belongs to the UPF0320 family.

The polypeptide is Putative UPF0320 protein YDR543C (Saccharomyces cerevisiae (strain ATCC 204508 / S288c) (Baker's yeast)).